Here is a 201-residue protein sequence, read N- to C-terminus: LexA repressor (201 aa).

The H-T-H motif DNA-binding region spans 28 to 48 (RAEIANQLGFRSANAAEEHLK). Residues Ser118 and Lys155 each act as for autocatalytic cleavage activity in the active site.

It belongs to the peptidase S24 family. As to quaternary structure, homodimer.

It carries out the reaction Hydrolysis of Ala-|-Gly bond in repressor LexA.. Functionally, represses a number of genes involved in the response to DNA damage (SOS response), including recA and lexA. In the presence of single-stranded DNA, RecA interacts with LexA causing an autocatalytic cleavage which disrupts the DNA-binding part of LexA, leading to derepression of the SOS regulon and eventually DNA repair. The chain is LexA repressor from Saccharophagus degradans (strain 2-40 / ATCC 43961 / DSM 17024).